The chain runs to 203 residues: Signal peptidase I (203 aa).

Residues 1-26 (MSSESDSPTPQTPPAQPAASQPKADS) form a disordered region. At 1-33 (MSSESDSPTPQTPPAQPAASQPKADSPLMEGIK) the chain is on the cytoplasmic side. Residues 17–26 (PAASQPKADS) show a composition bias toward low complexity. A helical transmembrane segment spans residues 34–50 (TIGLSVVLALGIRTFVA). Over 51 to 203 (EARYIPSESM…LGELGPPPSY (153 aa)) the chain is Extracellular. Active-site residues include Ser59 and Lys109.

The protein belongs to the peptidase S26 family.

It localises to the cell membrane. The catalysed reaction is Cleavage of hydrophobic, N-terminal signal or leader sequences from secreted and periplasmic proteins.. In Leptolyngbya laminosa (Phormidium laminosum), this protein is Signal peptidase I (lepB).